The primary structure comprises 669 residues: MTIKILPARLANQIAAGEVVERPASVIKELVENSLDSGATRIDIDIEKGGAKLIRVRDNGKGIAKDELGLALSRHATSKIHTLDDLEAIMSLGFRGEALASISSVSRLTLTSRPAAQEEAWSAYSEGRDMQVKLQPAAHPIGTTVEVLDLFFNTPARRKFLRTEKTEFAHIDELLKRIALSRFDVSINVRHNGKVIRQYRAAKNQLQTEKRIAAVCGNAFVRNMLRIELEHQGLKLHGWITTPDGARQQSDLQYCYVNGRMMRDKLINHAIRQSYEMSLKPDQFAAYVLFIELDPHQVDVNVHPAKHEVRFHQARLVHDFIYQALADALAQSSVIDKPQVNESAFHRAEPEERESQPETTPQYSPQSVSTTVPERVYQAIDKTPTYPGRTDYEIKPRDRAPSDSSVREARIADSFKRTDWIESKLAPKPNVGKERHAEPAPSKREVHAYHELLKTPDFESQQAEQPTSIESVREVSLPQVTALGKALVVVDEQFVLMSSDSGVALVSLPRSEFYRTKGQLTPSEGALKAQPLLVPLSMKLDTDLVRLAQDYQQDFAQLGIQLKARNDKALMVMGVPAPLRQQNLQNLVPDLLSYAQTWMKGEKASTQMLPALIDWLAVQVTTVKSHYTLSEAIQIIAELEQLRHGQLPLDDKTFVSAVDFSATIAKLKP.

A disordered region spans residues 343–408 (SAFHRAEPEE…RAPSDSSVRE (66 aa)). Positions 344-356 (AFHRAEPEERESQ) are enriched in basic and acidic residues. Positions 357–372 (PETTPQYSPQSVSTTV) are enriched in polar residues. Residues 390–408 (TDYEIKPRDRAPSDSSVRE) show a composition bias toward basic and acidic residues.

The protein belongs to the DNA mismatch repair MutL/HexB family.

In terms of biological role, this protein is involved in the repair of mismatches in DNA. It is required for dam-dependent methyl-directed DNA mismatch repair. May act as a 'molecular matchmaker', a protein that promotes the formation of a stable complex between two or more DNA-binding proteins in an ATP-dependent manner without itself being part of a final effector complex. The polypeptide is DNA mismatch repair protein MutL (Vibrio parahaemolyticus serotype O3:K6 (strain RIMD 2210633)).